Here is an 861-residue protein sequence, read N- to C-terminus: DNA mismatch repair protein MutS (861 aa).

618–625 (GPNMGGKS) contacts ATP.

This sequence belongs to the DNA mismatch repair MutS family.

Its function is as follows. This protein is involved in the repair of mismatches in DNA. It is possible that it carries out the mismatch recognition step. This protein has a weak ATPase activity. The chain is DNA mismatch repair protein MutS from Shewanella sp. (strain ANA-3).